Reading from the N-terminus, the 924-residue chain is Isoleucine--tRNA ligase (924 aa).

The 'HIGH' region signature appears at 58–68 (PYANGQIHVGH). Residue Glu-561 participates in L-isoleucyl-5'-AMP binding. The short motif at 602 to 606 (KMSKS) is the 'KMSKS' region element. Lys-605 serves as a coordination point for ATP. Positions 887, 890, 907, and 910 each coordinate Zn(2+).

It belongs to the class-I aminoacyl-tRNA synthetase family. IleS type 1 subfamily. In terms of assembly, monomer. Requires Zn(2+) as cofactor.

The protein resides in the cytoplasm. It carries out the reaction tRNA(Ile) + L-isoleucine + ATP = L-isoleucyl-tRNA(Ile) + AMP + diphosphate. Its function is as follows. Catalyzes the attachment of isoleucine to tRNA(Ile). As IleRS can inadvertently accommodate and process structurally similar amino acids such as valine, to avoid such errors it has two additional distinct tRNA(Ile)-dependent editing activities. One activity is designated as 'pretransfer' editing and involves the hydrolysis of activated Val-AMP. The other activity is designated 'posttransfer' editing and involves deacylation of mischarged Val-tRNA(Ile). This chain is Isoleucine--tRNA ligase, found in Dichelobacter nodosus (strain VCS1703A).